The primary structure comprises 203 residues: uncharacterized protein (203 aa).

Residues 89–109 (CEIPFAACSVLSWSLPTIAAL) traverse the membrane as a helical segment.

It is found in the membrane. This is an uncharacterized protein from Saccharomyces cerevisiae (strain ATCC 204508 / S288c) (Baker's yeast).